A 121-amino-acid chain; its full sequence is Small ribosomal subunit protein uS13 (121 aa).

Residues 92–121 (HKAGLPVRGQKTHSNARTRKGPRLTKIKKR) are disordered. Residues 101-121 (QKTHSNARTRKGPRLTKIKKR) show a composition bias toward basic residues.

The protein belongs to the universal ribosomal protein uS13 family. In terms of assembly, part of the 30S ribosomal subunit. Forms a loose heterodimer with protein S19. Forms two bridges to the 50S subunit in the 70S ribosome.

Its function is as follows. Located at the top of the head of the 30S subunit, it contacts several helices of the 16S rRNA. In the 70S ribosome it contacts the 23S rRNA (bridge B1a) and protein L5 of the 50S subunit (bridge B1b), connecting the 2 subunits; these bridges are implicated in subunit movement. Contacts the tRNAs in the A and P-sites. This chain is Small ribosomal subunit protein uS13, found in Petrotoga mobilis (strain DSM 10674 / SJ95).